A 126-amino-acid chain; its full sequence is Profilin-1 (126 aa).

The protein belongs to the profilin family. In terms of assembly, occurs in many kinds of cells as a complex with monomeric actin in a 1:1 ratio.

It localises to the cytoplasm. It is found in the cytoskeleton. Functionally, binds to actin and affects the structure of the cytoskeleton. At high concentrations, profilin prevents the polymerization of actin, whereas it enhances it at low concentrations. By binding to PIP2, it inhibits the formation of IP3 and DG. The chain is Profilin-1 (proA) from Dictyostelium discoideum (Social amoeba).